The following is a 123-amino-acid chain: Large ribosomal subunit protein bL19c (123 aa).

This sequence belongs to the bacterial ribosomal protein bL19 family.

The protein localises to the plastid. Its subcellular location is the chloroplast. The sequence is that of Large ribosomal subunit protein bL19c (rpl19) from Porphyra purpurea (Red seaweed).